Consider the following 662-residue polypeptide: Calcium-dependent protease (662 aa).

Residues 196-529 form the Peptidase S8 domain; sequence QWHLKETTIG…YGRINALKAV (334 aa). Residues D233, H270, and S466 each act as charge relay system in the active site. A P/Homo B domain is found at 535–662; sequence AQPEPVSIFT…IRSLTIELGF (128 aa).

Belongs to the peptidase S8 family.

It is found in the cytoplasm. Functionally, degrades phycobiliproteins in vitro. Has a substrate specificity similar to that of trypsin. This Nostoc sp. (strain PCC 7120 / SAG 25.82 / UTEX 2576) protein is Calcium-dependent protease (prcA).